The chain runs to 317 residues: MTCKIIGSGGYLPQKIISNDELTKFVDTNDKWIRTRTGIFQRHIAGDTEYTSHLALKSAQKAIEDAMISVDDIDLIITCTTTPDNSFPSVATKLHGYLGLTNIPSFDLQAVCAGFIYGLQLTNSLIVSGKYKTILLIGAEKMTSLLDWNDRSTCVLFGDGAGSVILQRSNDESGLIDSNIFSSGTDYEILYTSGGTSMNGTSGKIVMQGQKLFRHAIAKMLQSIEDLLHANQFSVSDIDYFIPHQANIRIINKLAELLNIEEHKVVKTVEKHANCSAASIPLALSTLKESGKIKKGDILLFSAIGAGLTWGSALIRW.

Active-site residues include C112 and H244. Residues Q245–R249 form an ACP-binding region. Residue N274 is part of the active site.

Belongs to the thiolase-like superfamily. FabH family. In terms of assembly, homodimer.

The protein localises to the cytoplasm. The catalysed reaction is malonyl-[ACP] + acetyl-CoA + H(+) = 3-oxobutanoyl-[ACP] + CO2 + CoA. Its pathway is lipid metabolism; fatty acid biosynthesis. Catalyzes the condensation reaction of fatty acid synthesis by the addition to an acyl acceptor of two carbons from malonyl-ACP. Catalyzes the first condensation reaction which initiates fatty acid synthesis and may therefore play a role in governing the total rate of fatty acid production. Possesses both acetoacetyl-ACP synthase and acetyl transacylase activities. Its substrate specificity determines the biosynthesis of branched-chain and/or straight-chain of fatty acids. The sequence is that of Beta-ketoacyl-[acyl-carrier-protein] synthase III from Rickettsia typhi (strain ATCC VR-144 / Wilmington).